Consider the following 144-residue polypeptide: MAPKKKKVTGLIKLQIQAGQANPAPPVGPALGAHGVNIMEFCKAYNAATENQRGNVVPVEITVYEDRSFDFKLKTPPAAKLLLKAAGLQKGSGVPHTQKVGKVSMAQVREIAETKKEDLNARDIDAAAKIIAGTARSMGITVEG.

The protein belongs to the universal ribosomal protein uL11 family. In terms of assembly, part of the ribosomal stalk of the 50S ribosomal subunit. Interacts with L10 and the large rRNA to form the base of the stalk. L10 forms an elongated spine to which L12 dimers bind in a sequential fashion forming a multimeric L10(L12)X complex. Post-translationally, one or more lysine residues are methylated.

Forms part of the ribosomal stalk which helps the ribosome interact with GTP-bound translation factors. The protein is Large ribosomal subunit protein uL11 of Corynebacterium glutamicum (strain R).